The primary structure comprises 795 residues: Cyclin-dependent kinase 11B (795 aa).

Residues 17-60 show a composition bias toward basic and acidic residues; sequence LQEKKRRKEQEEKAEIKRLKNSDDRDSKRDSLEEGELRDHRMEI. A disordered region spans residues 17 to 412; it reads LQEKKRRKEQ…EGDYVPDSPA (396 aa). Phosphoserine occurs at positions 47 and 72. The span at 95–113 shows a compositional bias: basic residues; it reads EKAHHRKDEKRKEKRRHRS. Basic and acidic residues-rich tracts occupy residues 114 to 131, 138 to 227, 238 to 253, and 264 to 276; these read HSAE…EREH, REEQ…DKVK, PPRE…KPGE, and QLKE…RDLL. Residue S115 is modified to Phosphoserine. S283 is modified (phosphoserine). Residues 291-302 are compositionally biased toward low complexity; sequence SAESSSAESGSG. 2 stretches are compositionally biased toward acidic residues: residues 303-364 and 383-392; these read SEEE…EERE and ESEEAEEEVG. One can recognise a Protein kinase domain in the interval 438–723; sequence FQCLNRIEEG…AEDGLKHEYF (286 aa). Residues 444 to 452 and K467 contribute to the ATP site; that span reads IEEGTYGVV. Residue S482 is modified to Phosphoserine; by CDK7. T488 is modified (phosphothreonine; by CDK7). D562 (proton acceptor) is an active-site residue. A Phosphoserine modification is found at S589. Y594 is subject to Phosphotyrosine. A Phosphothreonine modification is found at T595. Residue K641 forms a Glycyl lysine isopeptide (Lys-Gly) (interchain with G-Cter in SUMO2) linkage. A disordered region spans residues 733 to 795; that stretch reads SMFPTWPAKS…AAGPGFSLKF (63 aa). T751 carries the post-translational modification Phosphothreonine. Phosphoserine is present on S752.

The protein belongs to the protein kinase superfamily. CMGC Ser/Thr protein kinase family. CDC2/CDKX subfamily. In terms of assembly, cleaved isoform SV9 (p110C) binds to the serine/threonine kinase PAK1 and RANBP9. p110C interacts with RNPS1. Isoform 7, but not isoform SV9, nor its cleavage product p110C, interacts with CCND3. Interacts with CCNL1 and CCNL2. Forms complexes with pre-mRNA-splicing factors, including at least SRSF1, SRSF2 and SRSF7/SLU7. Interacts with isoform 5 of MYO18A. (Microbial infection) Interacts with human herpes virus 1 (HHV-1) transcriptional regulator ICP22. Requires Mg(2+) as cofactor. Post-translationally, during FAS- or TNF-induced apoptosis, isoform SV9 is cleaved by caspases to produce p110C, a fragment that contains the C-terminal kinase domain. In terms of processing, phosphorylation at Ser-115 creates a binding site for 14-3-3 proteins. p110C can be autophosphorylated. As to expression, expressed ubiquitously. Some evidence of isoform-specific tissue distribution.

It localises to the cytoplasm. The protein localises to the nucleus. The catalysed reaction is L-seryl-[protein] + ATP = O-phospho-L-seryl-[protein] + ADP + H(+). It carries out the reaction L-threonyl-[protein] + ATP = O-phospho-L-threonyl-[protein] + ADP + H(+). Phosphorylation at Thr-448 or Tyr-449 inactivates the enzyme, while phosphorylation at Thr-595 activates it. Its function is as follows. Plays multiple roles in cell cycle progression, cytokinesis and apoptosis. Involved in pre-mRNA splicing in a kinase activity-dependent manner. Isoform 7 may act as a negative regulator of normal cell cycle progression. This Homo sapiens (Human) protein is Cyclin-dependent kinase 11B (CDK11B).